Consider the following 115-residue polypeptide: U3-lycotoxin-Ls1u (115 aa).

An N-terminal signal peptide occupies residues 1–20 (MKFVLLFGVLLVTLFSYSSA). The propeptide occupies 21–44 (EMLDDFDQADEDELLSLIEKEEAR). 3 disulfide bridges follow: C48–C63, C55–C72, and C62–C87.

It belongs to the neurotoxin 19 (CSTX) family. 01 subfamily. In terms of tissue distribution, expressed by the venom gland.

Its subcellular location is the secreted. The polypeptide is U3-lycotoxin-Ls1u (Lycosa singoriensis (Wolf spider)).